The primary structure comprises 58 residues: Proteinase inhibitor PSKP-2 (58 aa).

The 58-residue stretch at 1-58 (VIEPDCKKYEGKKCPPDIALVCGTNGREYYNECALCVFIRDSTLKADKAIKIKKWGKC) folds into the Kazal-like domain. 3 disulfides stabilise this stretch: cysteine 6–cysteine 36, cysteine 14–cysteine 33, and cysteine 22–cysteine 58.

In terms of tissue distribution, skin.

The protein resides in the secreted. May have a role in mucosal defense against microbes by interacting directly with their membranes. In Phyllomedusa sauvagei (Sauvage's leaf frog), this protein is Proteinase inhibitor PSKP-2.